The following is a 193-amino-acid chain: NADH-quinone oxidoreductase subunit B (193 aa).

Cysteine 72, cysteine 73, cysteine 137, and cysteine 167 together coordinate [4Fe-4S] cluster.

Belongs to the complex I 20 kDa subunit family. As to quaternary structure, NDH-1 is composed of 14 different subunits. Subunits NuoB, C, D, E, F, and G constitute the peripheral sector of the complex. It depends on [4Fe-4S] cluster as a cofactor.

It is found in the cell inner membrane. The enzyme catalyses a quinone + NADH + 5 H(+)(in) = a quinol + NAD(+) + 4 H(+)(out). Functionally, NDH-1 shuttles electrons from NADH, via FMN and iron-sulfur (Fe-S) centers, to quinones in the respiratory chain. The immediate electron acceptor for the enzyme in this species is believed to be ubiquinone. Couples the redox reaction to proton translocation (for every two electrons transferred, four hydrogen ions are translocated across the cytoplasmic membrane), and thus conserves the redox energy in a proton gradient. The sequence is that of NADH-quinone oxidoreductase subunit B from Bradyrhizobium sp. (strain ORS 278).